Here is a 293-residue protein sequence, read N- to C-terminus: MSIERLGYLGFAVKDVPAWDHFLTKSVGLMAAGSAGDAALYRADQRAWRIAVQPGELDDLAYAGLEVDDAAALERMADKLRQAGVAFTRGDEALMQQRKVMGLLCLQDPFGLPLEIYYGPAEIFHEPFLPSAPVSGFVTGDQGIGHFVRCVPDTAKAMAFYTEVLGFVLSDIIDIQMGPETSVPAHFLHCNGRHHTIALAAFPIPKRIHHFMLQANTIDDVGYAFDRLDAAGRITSLLGRHTNDQTLSFYADTPSPMIEVEFGWGPRTVDSSWTVARHSRTAMWGHKSVRGQR.

2 consecutive VOC domains span residues 5 to 119 (RLGY…IYYG) and 143 to 265 (GIGH…FGWG). Fe cation-binding residues include His-146, His-210, and Glu-261.

The protein belongs to the extradiol ring-cleavage dioxygenase family. Homooctamer. Requires Fe(2+) as cofactor.

It catalyses the reaction biphenyl-2,3-diol + O2 = 2-hydroxy-6-oxo-6-phenylhexa-2,4-dienoate + H(+). It functions in the pathway xenobiotic degradation; biphenyl degradation; 2-hydroxy-2,4-pentadienoate and benzoate from biphenyl: step 3/4. This Pseudomonas sp. (strain KKS102) protein is Biphenyl-2,3-diol 1,2-dioxygenase (bphC).